Reading from the N-terminus, the 143-residue chain is SsrA-binding protein (143 aa).

The protein belongs to the SmpB family.

It is found in the cytoplasm. In terms of biological role, required for rescue of stalled ribosomes mediated by trans-translation. Binds to transfer-messenger RNA (tmRNA), required for stable association of tmRNA with ribosomes. tmRNA and SmpB together mimic tRNA shape, replacing the anticodon stem-loop with SmpB. tmRNA is encoded by the ssrA gene; the 2 termini fold to resemble tRNA(Ala) and it encodes a 'tag peptide', a short internal open reading frame. During trans-translation Ala-aminoacylated tmRNA acts like a tRNA, entering the A-site of stalled ribosomes, displacing the stalled mRNA. The ribosome then switches to translate the ORF on the tmRNA; the nascent peptide is terminated with the 'tag peptide' encoded by the tmRNA and targeted for degradation. The ribosome is freed to recommence translation, which seems to be the essential function of trans-translation. In Deinococcus radiodurans (strain ATCC 13939 / DSM 20539 / JCM 16871 / CCUG 27074 / LMG 4051 / NBRC 15346 / NCIMB 9279 / VKM B-1422 / R1), this protein is SsrA-binding protein.